A 439-amino-acid polypeptide reads, in one-letter code: Sorting nexin-31 (439 aa).

A PX domain is found at 1-109 (MKMHFCIPVS…EFLTLVQLHT (109 aa)). The segment at 384-409 (TEQSPEMQIEVPEQGRSKKHPSQPSQ) is disordered.

This sequence belongs to the sorting nexin family. Interacts with CCDC22, CCDC93, VPS26C and VPS35L, associates with the retriever and CCC complexes.

May be involved in protein trafficking. The chain is Sorting nexin-31 (Snx31) from Mus musculus (Mouse).